Consider the following 182-residue polypeptide: IQ domain-containing protein F1 (182 aa).

Composition is skewed to basic and acidic residues over residues 1 to 10 (MGEEQQKPEE) and 31 to 43 (ETEK…KQEL). Residues 1-43 (MGEEQQKPEELNAPTDDAPQEKQQPADLSSETEKAKSKKKQEL) form a disordered region. 2 IQ domains span residues 45–74 (EKDQ…SAWI) and 101–130 (EQWA…AVRT).

Interacts with calmodulin. Specifically expressed in testes and mature spermatozoa (at protein level).

It is found in the cytoplasmic vesicle. The protein resides in the secretory vesicle. It localises to the acrosome. Functionally, involved in sperm capacitation and acrosome reaction. In Mus musculus (Mouse), this protein is IQ domain-containing protein F1.